Here is a 110-residue protein sequence, read N- to C-terminus: Nucleoid-associated protein Tola_2216 (110 aa).

The protein belongs to the YbaB/EbfC family. In terms of assembly, homodimer.

Its subcellular location is the cytoplasm. It is found in the nucleoid. Binds to DNA and alters its conformation. May be involved in regulation of gene expression, nucleoid organization and DNA protection. The chain is Nucleoid-associated protein Tola_2216 from Tolumonas auensis (strain DSM 9187 / NBRC 110442 / TA 4).